A 555-amino-acid chain; its full sequence is CTP synthase (555 aa).

Residues Met-1 to Ile-271 are amidoligase domain. Ser-19 is a CTP binding site. Residue Ser-19 coordinates UTP. ATP-binding positions include Ser-20–Leu-25 and Asp-77. Residues Asp-77 and Glu-145 each coordinate Mg(2+). CTP contacts are provided by residues Asp-152 to Glu-154, Lys-192 to Gln-197, and Lys-228. Residues Lys-192–Gln-197 and Lys-228 each bind UTP. Positions Arg-297 to Gln-538 constitute a Glutamine amidotransferase type-1 domain. Position 358 (Gly-358) interacts with L-glutamine. Cys-385 (nucleophile; for glutamine hydrolysis) is an active-site residue. Residues Leu-386 to Gln-389, Glu-409, and Arg-466 each bind L-glutamine. Active-site residues include His-511 and Glu-513.

This sequence belongs to the CTP synthase family. In terms of assembly, homotetramer.

It catalyses the reaction UTP + L-glutamine + ATP + H2O = CTP + L-glutamate + ADP + phosphate + 2 H(+). The enzyme catalyses L-glutamine + H2O = L-glutamate + NH4(+). The catalysed reaction is UTP + NH4(+) + ATP = CTP + ADP + phosphate + 2 H(+). It participates in pyrimidine metabolism; CTP biosynthesis via de novo pathway; CTP from UDP: step 2/2. Its activity is regulated as follows. Allosterically activated by GTP, when glutamine is the substrate; GTP has no effect on the reaction when ammonia is the substrate. The allosteric effector GTP functions by stabilizing the protein conformation that binds the tetrahedral intermediate(s) formed during glutamine hydrolysis. Inhibited by the product CTP, via allosteric rather than competitive inhibition. In terms of biological role, catalyzes the ATP-dependent amination of UTP to CTP with either L-glutamine or ammonia as the source of nitrogen. Regulates intracellular CTP levels through interactions with the four ribonucleotide triphosphates. The polypeptide is CTP synthase (Anaeromyxobacter sp. (strain Fw109-5)).